The chain runs to 238 residues: Orotidine 5'-phosphate decarboxylase (238 aa).

Substrate-binding positions include Asp10, Lys32, 59 to 68, Thr122, Arg184, Gln193, Gly213, and Arg214; that span reads DLKLHDIPNT. Lys61 functions as the Proton donor in the catalytic mechanism.

It belongs to the OMP decarboxylase family. Type 1 subfamily. In terms of assembly, homodimer.

It carries out the reaction orotidine 5'-phosphate + H(+) = UMP + CO2. It participates in pyrimidine metabolism; UMP biosynthesis via de novo pathway; UMP from orotate: step 2/2. Catalyzes the decarboxylation of orotidine 5'-monophosphate (OMP) to uridine 5'-monophosphate (UMP). In Bacillus anthracis (strain A0248), this protein is Orotidine 5'-phosphate decarboxylase.